A 1203-amino-acid polypeptide reads, in one-letter code: DNA-directed RNA polymerase subunit beta (1203 aa).

The segment covering Ala1174–Ala1195 has biased composition (basic and acidic residues). The interval Ala1174–Glu1203 is disordered.

The protein belongs to the RNA polymerase beta chain family. As to quaternary structure, the RNAP catalytic core consists of 2 alpha, 1 beta, 1 beta' and 1 omega subunit. When a sigma factor is associated with the core the holoenzyme is formed, which can initiate transcription.

It carries out the reaction RNA(n) + a ribonucleoside 5'-triphosphate = RNA(n+1) + diphosphate. In terms of biological role, DNA-dependent RNA polymerase catalyzes the transcription of DNA into RNA using the four ribonucleoside triphosphates as substrates. This is DNA-directed RNA polymerase subunit beta from Streptococcus pneumoniae (strain JJA).